Reading from the N-terminus, the 177-residue chain is FANCD2 opposite strand protein (177 aa).

This Homo sapiens (Human) protein is FANCD2 opposite strand protein (FANCD2OS).